Consider the following 2280-residue polypeptide: Genome polyprotein (2280 aa).

An SF3 helicase domain is found at glutamate 454–lysine 608. Glycine 480 to threonine 487 contributes to the ATP binding site. Tyrosine 965 bears the O-(5'-phospho-RNA)-tyrosine mark. In terms of domain architecture, Peptidase C24 spans alanine 1054 to glutamate 1202. Active-site for 3CLpro activity residues include histidine 1084, glutamate 1105, and cysteine 1169. Residues glycine 1442–phenylalanine 1567 enclose the RdRp catalytic domain. A disordered region spans residues glycine 1722–proline 1746. Over residues asparagine 1723–proline 1735 the composition is skewed to polar residues.

In terms of assembly, homodimer. Homomultimer. In terms of processing, specific enzymatic cleavages in vivo yield mature proteins. Pro-Pol is first autocatalytically cleaved, then processes the whole polyprotein. Post-translationally, VPg is uridylylated by the polymerase and is covalently attached to the 5'-end of the polyadenylated genomic and subgenomic RNAs. This uridylylated form acts as a nucleotide-peptide primer for the polymerase.

Its subcellular location is the virion. It is found in the host cytoplasm. The enzyme catalyses a ribonucleoside 5'-triphosphate + H2O = a ribonucleoside 5'-diphosphate + phosphate + H(+). It catalyses the reaction RNA(n) + a ribonucleoside 5'-triphosphate = RNA(n+1) + diphosphate. The catalysed reaction is Endopeptidase with a preference for cleavage when the P1 position is occupied by Glu-|-Xaa and the P1' position is occupied by Gly-|-Yaa.. Its function is as follows. Together with NTPase and NS4, initiates the formation of the replication complex. Induces the proliferation of the host smooth ER membranes forming long tubular structures. These remodeled membranes probably form the viral factories that contain the replication complex. In terms of biological role, displays NTPase activity, but no helicase activity. Induces the formation of convoluted membranes derived from the host ER. These remodeled membranes probably form the viral factories that contain the replication complex. Together with NS2 and NS4, initiates the formation of the replication complex. Functionally, probable key protein responsible for the formation of membrane alterations by the virus. Induces the formation of convoluted membranes derived from the host ER. These remodeled membranes probably form the viral factories that contain the replication complex. Together with NS2 and NTPase, initiates the formation of the replication complex. Viral genome-linked protein is covalently linked to the 5'-end of the positive-strand, negative-strand genomic RNAs and subgenomic RNA. Acts as a genome-linked replication primer. May recruit ribosome to viral RNA thereby promoting viral proteins translation. Interacts with host translation initiation complex to allow the translation of viral proteins. Its function is as follows. Protease-polymerase p76 processes the polyprotein: Pro-Pol is first released by autocleavage, then all other proteins are cleaved. Cleaves host translation initiation factor eIF4G1, eIF4G2 and PABP1 thereby inducing a shutdown of host protein synthesis. This shutdown may not prevent viral mRNA from being translated since viral Vpg replaces the cap. It is also an RNA-directed RNA polymerase which replicates genomic and antigenomic viral RNA by recognizing specific signals. Also transcribes a subgenomic mRNA by initiating RNA synthesis internally on antigenomic RNA. This sgRNA codes for structural proteins. Catalyzes the covalent attachment VPg with viral RNAs. In terms of biological role, capsid protein self assembles to form an icosahedral capsid with a T=3 symmetry, about 38 nm in diameter, and consisting of 180 capsid proteins. The capsid encapsulate the genomic RNA and VP2 proteins. Attaches virion to target cells, inducing endocytosis of the viral particle. Acidification of the endosome induces conformational change of capsid protein thereby injecting virus genomic RNA into host cytoplasm. The sequence is that of Genome polyprotein from Sapporo virus (isolate GI/Human/Germany/pJG-Sap01) (Hu/Dresden/pJG-Sap01/DE).